We begin with the raw amino-acid sequence, 260 residues long: MEWWRRWYFLWGGDSVGAAILFYTRLPWPPSWPVNFDRIARWITLMGLLLSLILLALDRGLHWLGMDNLLQSAVVVSLWLALTGGLHLDGVADTADGLAVTNPSKRLAVMQDSYTGAYGVMAIAVVLLLKTFALASFSDHGLASWALIMALGWGRWGQLLAIALYPYLRENGKGAMHKRNLKLRPDLLLGTMIIVFGGVGMGYALAIEPWLILGATGSSALIAWAVGRWFAQQFKGHTGDTYGAVVEWSEVLILLGLSLV.

6 consecutive transmembrane segments (helical) span residues 7-27, 45-65, 117-137, 145-165, 187-207, and 210-230; these read WYFLWGGDSVGAAILFYTRLP, LMGLLLSLILLALDRGLHWLG, AYGVMAIAVVLLLKTFALASF, WALIMALGWGRWGQLLAIALY, LLLGTMIIVFGGVGMGYALAI, and WLILGATGSSALIAWAVGRWF.

It belongs to the CobS family. Requires Mg(2+) as cofactor.

The protein resides in the cell inner membrane. It catalyses the reaction alpha-ribazole + adenosylcob(III)inamide-GDP = adenosylcob(III)alamin + GMP + H(+). It carries out the reaction alpha-ribazole 5'-phosphate + adenosylcob(III)inamide-GDP = adenosylcob(III)alamin 5'-phosphate + GMP + H(+). It participates in cofactor biosynthesis; adenosylcobalamin biosynthesis; adenosylcobalamin from cob(II)yrinate a,c-diamide: step 7/7. In terms of biological role, joins adenosylcobinamide-GDP and alpha-ribazole to generate adenosylcobalamin (Ado-cobalamin). Also synthesizes adenosylcobalamin 5'-phosphate from adenosylcobinamide-GDP and alpha-ribazole 5'-phosphate. This is Adenosylcobinamide-GDP ribazoletransferase from Synechocystis sp. (strain ATCC 27184 / PCC 6803 / Kazusa).